The primary structure comprises 502 residues: Probable mRNA-splicing protein ubp10 (502 aa).

The UBP-type; degenerate zinc-finger motif lies at 56 to 153 (SQNLYLDTIN…YVMRPTFTKL (98 aa)). Cys-89, Cys-92, His-108, and His-114 together coordinate Zn(2+). The region spanning 178 to 501 (VGMNNIKNND…ESFIQLWERS (324 aa)) is the USP domain.

Belongs to the peptidase C19 family.

It localises to the nucleus. May play a role in mRNA splicing. It is unsure if the protein really exhibits hydrolase activity. Could be a competitor of ubiquitin C-terminal hydrolases (UCHs). This Schizosaccharomyces pombe (strain 972 / ATCC 24843) (Fission yeast) protein is Probable mRNA-splicing protein ubp10 (ubp10).